A 398-amino-acid polypeptide reads, in one-letter code: Protein FAM53A (398 aa).

The interval 85–253 (QWQPQSPRPG…TSTPALGGRR (169 aa)) is disordered. The segment covering 103–115 (VDPSESTGSSTAP) has biased composition (polar residues). Basic and acidic residues predominate over residues 123-132 (SLSEPEELVR). S125 carries the phosphoserine modification. Low complexity-rich tracts occupy residues 176 to 193 (STGP…ASGG) and 234 to 250 (TPLP…PALG). The short motif at 268 to 276 (KRSRRKRRR) is the Nuclear localization signal element. 2 positions are modified to phosphoserine: S301 and S304. A disordered region spans residues 336-398 (PGCSQRGLRT…ELDLEQIENN (63 aa)). The span at 363–375 (GSRRSSGDPRDGD) shows a compositional bias: basic and acidic residues.

Belongs to the FAM53 family.

Its subcellular location is the nucleus. Functionally, may play an important role in neural development; the dorsomedial roof of the third ventricle. In Homo sapiens (Human), this protein is Protein FAM53A.